The following is a 78-amino-acid chain: Large ribosomal subunit protein bL28 (78 aa).

The protein belongs to the bacterial ribosomal protein bL28 family.

The sequence is that of Large ribosomal subunit protein bL28 from Salmonella choleraesuis (strain SC-B67).